The following is a 146-amino-acid chain: Phospholipase A2, membrane associated (146 aa).

Positions 1-21 (MKVLLLLAVVIMAFGSIQVQG) are cleaved as a signal peptide. Intrachain disulfides connect cysteine 47-cysteine 139, cysteine 49-cysteine 65, cysteine 64-cysteine 119, cysteine 70-cysteine 146, cysteine 71-cysteine 112, cysteine 80-cysteine 105, and cysteine 98-cysteine 110. Ca(2+) contacts are provided by histidine 48, glycine 50, and glycine 52. Histidine 68 is an active-site residue. Aspartate 69 provides a ligand contact to Ca(2+). Residue aspartate 113 is part of the active site.

This sequence belongs to the phospholipase A2 family. Ca(2+) is required as a cofactor.

The protein localises to the secreted. The protein resides in the cell membrane. Its subcellular location is the mitochondrion outer membrane. The enzyme catalyses a 1,2-diacyl-sn-glycero-3-phosphoethanolamine + H2O = a 1-acyl-sn-glycero-3-phosphoethanolamine + a fatty acid + H(+). The catalysed reaction is 1-hexadecanoyl-2-(9Z-octadecenoyl)-sn-glycero-3-phosphoethanolamine + H2O = 1-hexadecanoyl-sn-glycero-3-phosphoethanolamine + (9Z)-octadecenoate + H(+). It catalyses the reaction 1-hexadecanoyl-2-(9Z,12Z-octadecadienoyl)-sn-glycero-3-phosphoethanolamine + H2O = 1-hexadecanoyl-sn-glycero-3-phosphoethanolamine + (9Z,12Z)-octadecadienoate + H(+). It carries out the reaction 1-hexadecanoyl-2-(5Z,8Z,11Z,14Z-eicosatetraenoyl)-sn-glycero-3-phosphoethanolamine + H2O = 1-hexadecanoyl-sn-glycero-3-phosphoethanolamine + (5Z,8Z,11Z,14Z)-eicosatetraenoate + H(+). The enzyme catalyses N-hexadecanoyl-1,2-di-(9Z-octadecenoyl)-sn-glycero-3-phosphoethanolamine + H2O = N-hexadecanoyl-1-(9Z-octadecenoyl)-sn-glycero-3-phosphoethanolamine + (9Z)-octadecenoate + H(+). The catalysed reaction is 1,2-dihexadecanoyl-sn-glycero-3-phospho-(1'-sn-glycerol) + H2O = 1-hexadecanoyl-sn-glycero-3-phospho-(1'-sn-glycerol) + hexadecanoate + H(+). It catalyses the reaction 1-hexadecanoyl-2-(9Z-octadecenoyl)-sn-glycero-3-phosphoglycerol + H2O = 1-hexadecanoyl-sn-glycero-3-phosphoglycerol + (9Z)-octadecenoate + H(+). It carries out the reaction 1-hexadecanoyl-2-(9Z-octadecenoyl)-sn-glycero-3-phospho-(1'-sn-glycerol) + H2O = 1-hexadecanoyl-sn-glycero-3-phospho-(1'-sn-glycerol) + (9Z)-octadecenoate + H(+). The enzyme catalyses a 1,2-diacyl-sn-glycero-3-phosphocholine + H2O = a 1-acyl-sn-glycero-3-phosphocholine + a fatty acid + H(+). The catalysed reaction is 1,2-dihexadecanoyl-sn-glycero-3-phosphocholine + H2O = 1-hexadecanoyl-sn-glycero-3-phosphocholine + hexadecanoate + H(+). It catalyses the reaction 1-hexadecanoyl-2-(9Z-octadecenoyl)-sn-glycero-3-phosphocholine + H2O = 1-hexadecanoyl-sn-glycero-3-phosphocholine + (9Z)-octadecenoate + H(+). It carries out the reaction 1-hexadecanoyl-2-(9Z,12Z-octadecadienoyl)-sn-glycero-3-phosphocholine + H2O = (9Z,12Z)-octadecadienoate + 1-hexadecanoyl-sn-glycero-3-phosphocholine + H(+). The enzyme catalyses 1-hexadecanoyl-2-(4Z,7Z,10Z,13Z,16Z,19Z-docosahexaenoyl)-sn-glycero-3-phosphocholine + H2O = (4Z,7Z,10Z,13Z,16Z,19Z)-docosahexaenoate + 1-hexadecanoyl-sn-glycero-3-phosphocholine + H(+). Functionally, secretory calcium-dependent phospholipase A2 that primarily targets extracellular phospholipids with implications in host antimicrobial defense, inflammatory response and tissue regeneration. Hydrolyzes the ester bond of the fatty acyl group attached at sn-2 position of phospholipids (phospholipase A2 activity) with preference for phosphatidylethanolamines and phosphatidylglycerols over phosphatidylcholines. Contributes to lipid remodeling of cellular membranes and generation of lipid mediators involved in pathogen clearance. Displays bactericidal activity against Gram-positive bacteria by directly hydrolyzing phospholipids of the bacterial membrane. Upon sterile inflammation, targets membrane phospholipids of extracellular mitochondria released from activated platelets, generating free unsaturated fatty acids such as arachidonate that is used by neighboring leukocytes to synthesize inflammatory eicosanoids such as leukotrienes. Simultaneously, by compromising mitochondrial membrane integrity, promotes the release in circulation of potent damage-associated molecular pattern molecules that activate the innate immune response. Plays a stem cell regulator role in the intestinal crypt. Within intracellular compartment mediates Paneth cell differentiation and its stem cell supporting functions by inhibiting Wnt signaling pathway in intestinal stem cell (ICS). Secreted in the intestinal lumen upon inflammation, acts in an autocrine way and promotes prostaglandin E2 synthesis that stimulates Wnt signaling pathway in ICS cells and tissue regeneration. May play a role in the biosynthesis of N-acyl ethanolamines that regulate energy metabolism and inflammation. Hydrolyzes N-acyl phosphatidylethanolamines to N-acyl lysophosphatidylethanolamines, which are further cleaved by a lysophospholipase D to release N-acyl ethanolamines. Independent of its catalytic activity, acts as a ligand for integrins. Binds to and activates integrins ITGAV:ITGB3, ITGA4:ITGB1 and ITGA5:ITGB1. Binds to a site (site 2) which is distinct from the classical ligand-binding site (site 1) and induces integrin conformational changes and enhanced ligand binding to site 1. Induces cell proliferation in an integrin-dependent manner. The chain is Phospholipase A2, membrane associated (Pla2g2a) from Rattus norvegicus (Rat).